The chain runs to 310 residues: Aspartate carbamoyltransferase catalytic subunit (310 aa).

2 residues coordinate carbamoyl phosphate: Arg-58 and Thr-59. Position 86 (Lys-86) interacts with L-aspartate. Carbamoyl phosphate contacts are provided by Arg-108, His-137, and Gln-140. L-aspartate-binding residues include Arg-170 and Arg-225. Gly-264 and Pro-265 together coordinate carbamoyl phosphate.

This sequence belongs to the aspartate/ornithine carbamoyltransferase superfamily. ATCase family. As to quaternary structure, heterododecamer (2C3:3R2) of six catalytic PyrB chains organized as two trimers (C3), and six regulatory PyrI chains organized as three dimers (R2).

It carries out the reaction carbamoyl phosphate + L-aspartate = N-carbamoyl-L-aspartate + phosphate + H(+). Its pathway is pyrimidine metabolism; UMP biosynthesis via de novo pathway; (S)-dihydroorotate from bicarbonate: step 2/3. In terms of biological role, catalyzes the condensation of carbamoyl phosphate and aspartate to form carbamoyl aspartate and inorganic phosphate, the committed step in the de novo pyrimidine nucleotide biosynthesis pathway. The sequence is that of Aspartate carbamoyltransferase catalytic subunit from Coxiella burnetii (strain CbuK_Q154) (Coxiella burnetii (strain Q154)).